The sequence spans 438 residues: tRNA(Ile)-lysidine synthase (438 aa).

Residue 27-32 (SGGVDS) participates in ATP binding.

This sequence belongs to the tRNA(Ile)-lysidine synthase family.

The protein localises to the cytoplasm. It carries out the reaction cytidine(34) in tRNA(Ile2) + L-lysine + ATP = lysidine(34) in tRNA(Ile2) + AMP + diphosphate + H(+). In terms of biological role, ligates lysine onto the cytidine present at position 34 of the AUA codon-specific tRNA(Ile) that contains the anticodon CAU, in an ATP-dependent manner. Cytidine is converted to lysidine, thus changing the amino acid specificity of the tRNA from methionine to isoleucine. In Vibrio parahaemolyticus serotype O3:K6 (strain RIMD 2210633), this protein is tRNA(Ile)-lysidine synthase.